Here is a 342-residue protein sequence, read N- to C-terminus: Phosphatidate cytidylyltransferase, mitochondrial (342 aa).

This sequence belongs to the TAM41 family. Mg(2+) is required as a cofactor. Requires Co(2+) as cofactor. It depends on Cu(2+) as a cofactor.

It is found in the mitochondrion inner membrane. It catalyses the reaction a 1,2-diacyl-sn-glycero-3-phosphate + CTP + H(+) = a CDP-1,2-diacyl-sn-glycerol + diphosphate. It functions in the pathway phospholipid metabolism; CDP-diacylglycerol biosynthesis; CDP-diacylglycerol from sn-glycerol 3-phosphate: step 3/3. Its function is as follows. Catalyzes the formation of CDP-diacylglycerol (CDP-DAG) from phosphatidic acid (PA) in the mitochondrial inner membrane. Required for the biosynthesis of the dimeric phospholipid cardiolipin, which stabilizes supercomplexes of the mitochondrial respiratory chain in the mitochondrial inner membrane. This Drosophila melanogaster (Fruit fly) protein is Phosphatidate cytidylyltransferase, mitochondrial.